A 360-amino-acid polypeptide reads, in one-letter code: RNA-binding protein 1 (360 aa).

The RRM 1 domain occupies 6-82 (YKLFVGGIAK…KPVDVRKAIR (77 aa)). A coiled-coil region spans residues 93 to 113 (MQFLERKVQQMNGGLREMSSN). The RRM 2 domain maps to 120 to 197 (KKIFVGGLSS…KRVEVKRAIP (78 aa)).

Highly expressed in inflorescences and roots. Detected in leaves and seedlings, but not in stems. Expressed in vegetative shoot apex and root meristem, but not in root cap. Detected in flower buds, junction of pedicels, joints of immature siliques and pistil.

RNA binding protein. Can also bind in vitro to single-stranded DNA. The protein is RNA-binding protein 1 (RBP1) of Arabidopsis thaliana (Mouse-ear cress).